We begin with the raw amino-acid sequence, 314 residues long: tRNA dimethylallyltransferase (314 aa).

ATP is bound at residue 12–19; that stretch reads GPTASGKT. 14-19 lines the substrate pocket; the sequence is TASGKT. Interaction with substrate tRNA stretches follow at residues 37 to 40, 161 to 165, 242 to 247, and 275 to 282; these read DSAL, QRINR, RCVGYR, and KRQITWLR.

Belongs to the IPP transferase family. As to quaternary structure, monomer. The cofactor is Mg(2+).

It carries out the reaction adenosine(37) in tRNA + dimethylallyl diphosphate = N(6)-dimethylallyladenosine(37) in tRNA + diphosphate. In terms of biological role, catalyzes the transfer of a dimethylallyl group onto the adenine at position 37 in tRNAs that read codons beginning with uridine, leading to the formation of N6-(dimethylallyl)adenosine (i(6)A). This chain is tRNA dimethylallyltransferase, found in Mannheimia succiniciproducens (strain KCTC 0769BP / MBEL55E).